A 107-amino-acid polypeptide reads, in one-letter code: MGDSVLSAIQQTITQRKSANPSESYVAQLLHKGEDKILKKVIEEAGEVLMASKDKNPSHLVYEVADLWFHTMILLTHHDLKAEDVLDELARRQGLSGLAEKAARTES.

Belongs to the PRA-PH family.

It localises to the cytoplasm. The enzyme catalyses 1-(5-phospho-beta-D-ribosyl)-ATP + H2O = 1-(5-phospho-beta-D-ribosyl)-5'-AMP + diphosphate + H(+). Its pathway is amino-acid biosynthesis; L-histidine biosynthesis; L-histidine from 5-phospho-alpha-D-ribose 1-diphosphate: step 2/9. The sequence is that of Phosphoribosyl-ATP pyrophosphatase (hisE) from Neisseria meningitidis serogroup A / serotype 4A (strain DSM 15465 / Z2491).